Here is an 83-residue protein sequence, read N- to C-terminus: Transmembrane protein EP84R (83 aa).

Helical transmembrane passes span 31–51 (IIGV…IIIL) and 59–79 (AGSI…FLIY).

It belongs to the asfivirus EP84R family.

The protein localises to the virion membrane. The polypeptide is Transmembrane protein EP84R (Ornithodoros (relapsing fever ticks)).